The following is a 322-amino-acid chain: Ras association domain-containing protein 4 (322 aa).

A disordered region spans residues 96 to 161; that stretch reads EASPQDSKVP…SKSRAPSEAQ (66 aa). Position 142 is a phosphoserine (serine 142). Positions 175-264 constitute a Ras-associating domain; that stretch reads YNHKTSVFTP…KIFLMEADLS (90 aa). Residues 271–318 enclose the SARAH domain; it reads VAQYIKFEMPVLDSFVEKLKEEEEREIIKLTMKFQALRLTMLQRLEQL.

In terms of assembly, interacts directly with activated KRAS in a GTP-dependent manner.

Its function is as follows. Potential tumor suppressor. May act as a KRAS effector protein. May promote apoptosis and cell cycle arrest. This is Ras association domain-containing protein 4 (Rassf4) from Mus musculus (Mouse).